We begin with the raw amino-acid sequence, 60 residues long: MAVPKKKTSKSRKNMRRAHDFLTPPAASVCPQCKAPKLPHRACSSCGTYKGKEVIKSEEI.

The segment covering 1 to 16 (MAVPKKKTSKSRKNMR) has biased composition (basic residues). Positions 1–20 (MAVPKKKTSKSRKNMRRAHD) are disordered.

This sequence belongs to the bacterial ribosomal protein bL32 family.

The sequence is that of Large ribosomal subunit protein bL32 from Geobacter metallireducens (strain ATCC 53774 / DSM 7210 / GS-15).